We begin with the raw amino-acid sequence, 499 residues long: Diacylglycerol kinase 1 (499 aa).

Positions 41–194 (APCCPVVVFI…IDSWHIIMRM (154 aa)) constitute a DAGKc domain. Residues 442–479 (PCKSKSVNDPSSPMCCSNHDDDERNSLEDEDEWEEGRK) form a disordered region. Residues 446 to 456 (KSVNDPSSPMC) show a composition bias toward polar residues. The segment covering 459 to 468 (NHDDDERNSL) has biased composition (basic and acidic residues).

This sequence belongs to the eukaryotic diacylglycerol kinase family. Monomer. Highly expressed in roots.

The catalysed reaction is a 1,2-diacyl-sn-glycerol + ATP = a 1,2-diacyl-sn-glycero-3-phosphate + ADP + H(+). Its function is as follows. Phosphorylates the second messenger diacylglycerol (DAG) to generate phosphatidic acid (PA), another important signaling molecule. PA is required for plant development and responses to abiotic stress. May play a role in disease resistance responses to pathogen attack. Modulates root architecture by regulating the ratio of DAG and PA, which have opposite effect on the promotion or suppression of lateral roots vs seminal roots. Suppresses lateral root number, but promotes seminal root and crown root thickness. The protein is Diacylglycerol kinase 1 of Oryza sativa subsp. japonica (Rice).